The primary structure comprises 145 residues: Large ribosomal subunit protein uL15 (145 aa).

Positions 23-51 are disordered; that stretch reads IGSGWGKTGGRGHKGQKSRSGGKIRKSFE. Positions 32–47 are enriched in basic residues; it reads GRGHKGQKSRSGGKIR.

The protein belongs to the universal ribosomal protein uL15 family. In terms of assembly, part of the 50S ribosomal subunit.

Binds to the 23S rRNA. This chain is Large ribosomal subunit protein uL15, found in Buchnera aphidicola subsp. Cinara cedri (strain Cc).